Reading from the N-terminus, the 334-residue chain is Hydroxyproline O-arabinosyltransferase NOD3 (334 aa).

The chain crosses the membrane as a helical; Signal-anchor span at residues 1–18; that stretch reads LLMVLGFFFATYNLVSMI.

Belongs to the RDN family.

The protein localises to the golgi apparatus membrane. The enzyme catalyses trans-4-hydroxy-L-prolyl-[protein] + UDP-beta-L-arabinofuranose = O-(beta-L-arabinofuranosyl)-trans-4-hydroxy-L-prolyl-[protein] + UDP + H(+). Functionally, probable glycosyltransferase involved in the O-arabinosylation of several proteins including extensins and small signaling peptides. Catalyzes the transfer of the initial L-arabinose to the hydroxyl group of Hyp residues. Probably involved in the arabinosylation of CLAVATA3/ESR-related (CLE) signaling peptides that move from root to shoot, to interact with receptor kinase signaling that regulates nodulation. Involved in long distance nodulation signaling events. Involved in the autoregulation of nodulation (AON), a long distance systemic signaling from root to shoot and back again, which allows legumes to limit the number of root nodules formed based on available nitrogen and previous rhizobial colonization. In Pisum sativum (Garden pea), this protein is Hydroxyproline O-arabinosyltransferase NOD3.